A 152-amino-acid polypeptide reads, in one-letter code: Small ribosomal subunit protein uS15 (152 aa).

The interval 1–20 is disordered; sequence MNKRRANGSSHSTRPVRTGS.

The protein belongs to the universal ribosomal protein uS15 family. In terms of assembly, part of the 30S ribosomal subunit.

In Metallosphaera sedula (strain ATCC 51363 / DSM 5348 / JCM 9185 / NBRC 15509 / TH2), this protein is Small ribosomal subunit protein uS15.